We begin with the raw amino-acid sequence, 262 residues long: tRNA pseudouridine synthase A 2 (262 aa).

The active-site Nucleophile is aspartate 66. Tyrosine 125 contacts substrate.

This sequence belongs to the tRNA pseudouridine synthase TruA family. As to quaternary structure, homodimer.

It carries out the reaction uridine(38/39/40) in tRNA = pseudouridine(38/39/40) in tRNA. Its function is as follows. Formation of pseudouridine at positions 38, 39 and 40 in the anticodon stem and loop of transfer RNAs. This Protochlamydia amoebophila (strain UWE25) protein is tRNA pseudouridine synthase A 2.